The sequence spans 1292 residues: SH3 and multiple ankyrin repeat domains protein 2 (1292 aa).

Residues 56–150 (TVVLQKKDNE…HLVLKVVTVT (95 aa)) enclose the PDZ domain. Disordered stretches follow at residues 155-176 (PDDT…TALS), 331-393 (MPDA…SDNV), 488-508 (IKEP…METD), 604-656 (SSNA…KLLD), 671-743 (ALKE…EKKN), 774-811 (LTES…SECG), and 938-968 (IEEV…TLSS). The segment covering 338 to 354 (IPPPPATLPPSPPPPSP) has biased composition (pro residues). Low complexity predominate over residues 355-365 (SSFNSPKSPAP). Residues 375-384 (FTQNSGTKSP) are compositionally biased toward polar residues. Low complexity predominate over residues 492–504 (STSSSGKSSQGSS). Polar residues predominate over residues 604–623 (SSNAFTNNDSSHQGDVSNAR). Basic and acidic residues predominate over residues 719 to 743 (KRQETESKHEPDSSKEEKRQGEKKN). Over residues 941-952 (VDSRSGSDHHLE) the composition is skewed to basic and acidic residues. The span at 953–968 (TTSTISTVSSISTLSS) shows a compositional bias: low complexity. Residues 991–997 (PPVPPKP) carry the SH3-binding motif. The segment at 1087–1115 (TKTGEGLDSPTGMKTASLSTRGTDALSTV) is disordered. Residues 1098–1115 (GMKTASLSTRGTDALSTV) show a composition bias toward polar residues. The SAM domain occupies 1229–1292 (WTKQDVAEWL…ERALKQLLDR (64 aa)).

It belongs to the SHANK family.

It localises to the cytoplasm. Its subcellular location is the synapse. The protein resides in the postsynaptic density. In terms of biological role, seems to be an adapter protein in the postsynaptic density (PSD) of excitatory synapses that interconnects receptors of the postsynaptic membrane including NMDA-type and metabotropic glutamate receptors, and the actin-based cytoskeleton. May play a role in the structural and functional organization of the dendritic spine and synaptic junction. The protein is SH3 and multiple ankyrin repeat domains protein 2 (shank2) of Xenopus laevis (African clawed frog).